A 321-amino-acid polypeptide reads, in one-letter code: MKKNFYTISKTMSRSLKLILFSVFIGFSIFLIPQPTWAYPFWAQQKFENPREATGKIVCANCHVASMPTRAEVPQAVAADSVFKTVVEIPYKKDLQEIGADGSKVPLQVGAVVMLPDGFKLAPQERWTDEIKEETQGVYFTQYSEEQENIILVGPLPGDQNREIVFPVLSPDPRKDSNYNFGKYSIHVGGNRGRGQVYPTGEKSNNNLFTATNSGTITSIETNEDGSQIINLNNEEGESFTENLPAGTSLLIKEGDTIEKGAKLTEDPNVGGFGQLDKEIVLQSKARVIGMIIFFIGVGLSQIMLVLKKKQVEKVQAAEGI.

An N-terminal signal peptide occupies residues 1-38 (MKKNFYTISKTMSRSLKLILFSVFIGFSIFLIPQPTWA). Residues Tyr-39, Cys-59, Cys-62, and His-63 each contribute to the heme site. A helical transmembrane segment spans residues 288-308 (VIGMIIFFIGVGLSQIMLVLK).

It belongs to the cytochrome f family. The 4 large subunits of the cytochrome b6-f complex are cytochrome b6, subunit IV (17 kDa polypeptide, PetD), cytochrome f and the Rieske protein, while the 4 small subunits are PetG, PetL, PetM and PetN. The complex functions as a dimer. It depends on heme as a cofactor.

The protein resides in the cellular thylakoid membrane. In terms of biological role, component of the cytochrome b6-f complex, which mediates electron transfer between photosystem II (PSII) and photosystem I (PSI), cyclic electron flow around PSI, and state transitions. The chain is Cytochrome f from Prochlorococcus marinus (strain NATL2A).